The primary structure comprises 360 residues: Heat-inducible transcription repressor HrcA (360 aa).

It belongs to the HrcA family.

In terms of biological role, negative regulator of class I heat shock genes (grpE-dnaK-dnaJ and groELS operons). Prevents heat-shock induction of these operons. The polypeptide is Heat-inducible transcription repressor HrcA (Streptococcus thermophilus (strain CNRZ 1066)).